Here is a 430-residue protein sequence, read N- to C-terminus: Trigger factor (430 aa).

A PPIase FKBP-type domain is found at 165 to 250 (TDIAIFDFEG…LHQIKTKKIP (86 aa)).

This sequence belongs to the FKBP-type PPIase family. Tig subfamily.

Its subcellular location is the cytoplasm. It carries out the reaction [protein]-peptidylproline (omega=180) = [protein]-peptidylproline (omega=0). Its function is as follows. Involved in protein export. Acts as a chaperone by maintaining the newly synthesized protein in an open conformation. Functions as a peptidyl-prolyl cis-trans isomerase. The protein is Trigger factor of Onion yellows phytoplasma (strain OY-M).